Consider the following 261-residue polypeptide: Snake venom serine protease (261 aa).

Positions Met-1 to Thr-20 are cleaved as a signal peptide. Residues Ala-21–Arg-24 constitute a propeptide that is removed on maturation. The Peptidase S1 domain maps to Ile-25 to Ala-249. 6 disulfide bridges follow: Cys-31–Cys-163, Cys-50–Cys-66, Cys-98–Cys-256, Cys-142–Cys-210, Cys-174–Cys-189, and Cys-200–Cys-225. His-65 functions as the Charge relay system in the catalytic mechanism. N-linked (GlcNAc...) asparagine glycosylation occurs at Asn-103. The active-site Charge relay system is the Asp-110. Asn-117 and Asn-121 each carry an N-linked (GlcNAc...) asparagine glycan. Ser-204 functions as the Charge relay system in the catalytic mechanism.

This sequence belongs to the peptidase S1 family. Snake venom subfamily. As to quaternary structure, monomer. Expressed by the venom gland.

Its subcellular location is the secreted. Snake venom serine protease that may act in the hemostasis system of the prey. This chain is Snake venom serine protease, found in Philodryas olfersii (Green snake).